We begin with the raw amino-acid sequence, 62 residues long: UPF0291 protein CLM_2971 (62 aa).

This sequence belongs to the UPF0291 family.

It is found in the cytoplasm. The protein is UPF0291 protein CLM_2971 of Clostridium botulinum (strain Kyoto / Type A2).